Here is a 480-residue protein sequence, read N- to C-terminus: Glutamate--tRNA ligase (480 aa).

The 'HIGH' region motif lies at 21–31 (PSPTGYLHVGG). Positions 110, 112, 137, and 139 each coordinate Zn(2+). The short motif at 248–252 (KLSKR) is the 'KMSKS' region element. K251 contributes to the ATP binding site.

Belongs to the class-I aminoacyl-tRNA synthetase family. Glutamate--tRNA ligase type 1 subfamily. Monomer. It depends on Zn(2+) as a cofactor.

It is found in the cytoplasm. It carries out the reaction tRNA(Glu) + L-glutamate + ATP = L-glutamyl-tRNA(Glu) + AMP + diphosphate. Catalyzes the attachment of glutamate to tRNA(Glu) in a two-step reaction: glutamate is first activated by ATP to form Glu-AMP and then transferred to the acceptor end of tRNA(Glu). The polypeptide is Glutamate--tRNA ligase (Histophilus somni (strain 129Pt) (Haemophilus somnus)).